Reading from the N-terminus, the 196-residue chain is tRNA(Phe) 7-((3-amino-3-carboxypropyl)-4-demethylwyosine(37)-N(4))-methyltransferase 1 (196 aa).

It belongs to the TYW3 family.

It carries out the reaction 4-demethyl-7-[(3S)-3-amino-3-carboxypropyl]wyosine(37) in tRNA(Phe) + S-adenosyl-L-methionine = 7-[(3S)-3-amino-3-carboxypropyl]wyosine(37) in tRNA(Phe) + S-adenosyl-L-homocysteine + H(+). Its function is as follows. S-adenosyl-L-methionine-dependent methyltransferase that acts as a component of the wyosine derivatives biosynthesis pathway. Probably methylates N-4 position of wybutosine-86 to produce wybutosine-72. The sequence is that of tRNA(Phe) 7-((3-amino-3-carboxypropyl)-4-demethylwyosine(37)-N(4))-methyltransferase 1 from Pyrococcus horikoshii (strain ATCC 700860 / DSM 12428 / JCM 9974 / NBRC 100139 / OT-3).